The sequence spans 402 residues: Secondary metabolism regulator laeA (402 aa).

The disordered stretch occupies residues Met-1–Asp-70. The segment covering Ser-11–Cys-21 has biased composition (acidic residues).

This sequence belongs to the methyltransferase superfamily. LaeA methyltransferase family.

It localises to the nucleus. It carries out the reaction L-methionyl-[protein] + S-adenosyl-L-methionine = S-methyl-L-methionyl-[protein] + S-adenosyl-L-homocysteine. Functionally, methyltransferase that performs automethylation. No other methyl-accepting substrate has been identified yet. Acts as a global regulator for secondary metabolite gene expression. Negatively regulates the production of coprinoferrin, a structurally novel acylated tripeptide hydroxamate siderophore. This Coprinopsis cinerea (strain Okayama-7 / 130 / ATCC MYA-4618 / FGSC 9003) (Inky cap fungus) protein is Secondary metabolism regulator laeA.